The primary structure comprises 381 residues: MSTAVQFRGGTTAQHATFTGAAREITVDTDKNTVVVHDGATAGGFPLARHDLVKTAFIKADKSAVAFTRTGNATASIKAGTIVEVNGKLVQFTADTAITMPALTAGTDYAIYVCDDGTVRADSNFSAPTGYTSTTARKVGGFHYAPGSNAAAQAGGNTTAQINEYSLWDIKFRPAALDPRGMTLVAGAFWADIYLLGVNHLTDGTSKYNVTIADGSASPKKSTKFGGDGSAAYSDGAWYNFAEVMTHHGKRLPNYNEFQALAFGTTEATSSGGTDVPTTGVNGTGATSAWNIFTSKWGVVQASGCLWTWGNEFGGVNGASEYTANTGGRGSVYAQPAAALFGGAWNGTSLSGSRAALWYSGPSFSFAFFGARGVCDHLILE.

In terms of assembly, homotrimer.

The protein resides in the virion. Tail fiber protein located at the distal ends of the fibers that binds to the adhesion receptors on the host surface, thereby determining the host range. The phage can alter its tropism by modifying this protein. Variants are expressed through a diversity-generating retroelement (DGR) that creates mutant copies of a template repeat and replaces the end of the tail fiber receptor-binding protein with these sequences, thus changing the host range. Milliards of variants of the fiber receptor-binding protein can be created with this system. This Bordetella phage BPP-1 protein is Tail fiber receptor-binding protein.